Reading from the N-terminus, the 93-residue chain is Phosphoribosyl-ATP pyrophosphatase (93 aa).

Belongs to the PRA-PH family.

The protein resides in the cytoplasm. It catalyses the reaction 1-(5-phospho-beta-D-ribosyl)-ATP + H2O = 1-(5-phospho-beta-D-ribosyl)-5'-AMP + diphosphate + H(+). The protein operates within amino-acid biosynthesis; L-histidine biosynthesis; L-histidine from 5-phospho-alpha-D-ribose 1-diphosphate: step 2/9. In Corynebacterium aurimucosum (strain ATCC 700975 / DSM 44827 / CIP 107346 / CN-1) (Corynebacterium nigricans), this protein is Phosphoribosyl-ATP pyrophosphatase.